The primary structure comprises 261 residues: 14-3-3-like protein B (261 aa).

Positions Asp-237–Glu-261 are disordered.

The protein belongs to the 14-3-3 family.

The polypeptide is 14-3-3-like protein B (Vicia faba (Broad bean)).